Consider the following 141-residue polypeptide: uncharacterized protein (141 aa).

This sequence belongs to the mimivirus L163/R849 family.

This is an uncharacterized protein from Acanthamoeba polyphaga mimivirus (APMV).